The chain runs to 85 residues: Antifungal protein (85 aa).

A signal peptide spans 1–18 (MVKLFVIVILALIAVAFG). Repeat copies occupy residues 19-25 (QHGHGGQ) and 67-73 (QHGHGGQ). A 2 X 7 AA repeats of Q-H-G-H-G-G-Q region spans residues 19–73 (QHGHGGQDQHGYGHGQQAVYGKGHEGHGVNNLGQDGHGQHGYAHGHSDQHGHGGQ). A compositionally biased stretch (gly residues) spans 22–32 (HGGQDQHGYGH). Positions 22–85 (HGGQDQHGYG…QHDGYKNRGY (64 aa)) are disordered. The segment covering 63–85 (GHSDQHGHGGQHGQHDGYKNRGY) has biased composition (basic and acidic residues).

Homodimer. The N-terminus is blocked. In terms of tissue distribution, hemolymph.

Functionally, this protein inhibits the growth of a variety of fungal species. The antifungal activity of this protein is enhanced by the presence of sarcotoxin IA. This Sarcophaga peregrina (Flesh fly) protein is Antifungal protein.